A 341-amino-acid polypeptide reads, in one-letter code: O(6)-methylguanine-induced apoptosis 2 (341 aa).

Positions 1 to 10 (MSQKFANTGS) are enriched in polar residues. Residues 1–23 (MSQKFANTGSFIEREDLGKPNKG) are disordered. Over residues 12 to 23 (IEREDLGKPNKG) the composition is skewed to basic and acidic residues. STPGR repeat units lie at residues 73–80 (PGPGFYNV), 115–123 (PAANAYTIR), 154–160 (PAPNHYN), 194–213 (GPAP…SPKV), 232–254 (GPGP…HLPK), 273–284 (LPGPGQYEIVNY), and 313–323 (LPGPASYKPEI). Tyrosine 78 carries the phosphotyrosine modification.

It belongs to the STPG1 family.

Its subcellular location is the cytoplasm. It is found in the nucleus. In terms of biological role, may positively contribute to the induction of apoptosis triggered by O(6)-methylguanine. In Rattus norvegicus (Rat), this protein is O(6)-methylguanine-induced apoptosis 2 (Stpg1).